Reading from the N-terminus, the 802-residue chain is Leucine--tRNA ligase (802 aa).

The short motif at 40-51 is the 'HIGH' region element; that stretch reads PYPSGAGLHVGH. Residues 576–580 carry the 'KMSKS' region motif; that stretch reads KMSKS. ATP is bound at residue Lys-579.

This sequence belongs to the class-I aminoacyl-tRNA synthetase family.

It is found in the cytoplasm. It carries out the reaction tRNA(Leu) + L-leucine + ATP = L-leucyl-tRNA(Leu) + AMP + diphosphate. This is Leucine--tRNA ligase from Bacillus cereus (strain G9842).